Consider the following 260-residue polypeptide: Ribonuclease HII (260 aa).

One can recognise an RNase H type-2 domain in the interval 73-260; the sequence is LHIAGIDEAG…APVQQQLDIV (188 aa). A divalent metal cation is bound by residues Asp-79, Glu-80, and Asp-171.

Belongs to the RNase HII family. The cofactor is Mn(2+). Mg(2+) is required as a cofactor.

The protein localises to the cytoplasm. The catalysed reaction is Endonucleolytic cleavage to 5'-phosphomonoester.. Endonuclease that specifically degrades the RNA of RNA-DNA hybrids. This Desulfitobacterium hafniense (strain Y51) protein is Ribonuclease HII.